A 294-amino-acid polypeptide reads, in one-letter code: Large ribosomal subunit protein uL4m (294 aa).

Positions Glu-119–Gly-139 are disordered. Residue Arg-147 is modified to Omega-N-methylarginine.

Belongs to the universal ribosomal protein uL4 family. In terms of assembly, component of the mitochondrial ribosome large subunit (39S) which comprises a 16S rRNA and about 50 distinct proteins. Interacts with MIEF1 upstream open reading frame protein.

The protein localises to the mitochondrion. This chain is Large ribosomal subunit protein uL4m (Mrpl4), found in Mus musculus (Mouse).